A 120-amino-acid chain; its full sequence is Large ribosomal subunit protein uL18 (120 aa).

The protein belongs to the universal ribosomal protein uL18 family. Part of the 50S ribosomal subunit; part of the 5S rRNA/L5/L18/L25 subcomplex. Contacts the 5S and 23S rRNAs.

This is one of the proteins that bind and probably mediate the attachment of the 5S RNA into the large ribosomal subunit, where it forms part of the central protuberance. The chain is Large ribosomal subunit protein uL18 from Macrococcus caseolyticus (strain JCSC5402) (Macrococcoides caseolyticum).